We begin with the raw amino-acid sequence, 231 residues long: Class II histocompatibility antigen, B-L beta chain (231 aa).

Residues 1–89 (FFQWSATVEC…IVAPLTLQRR (89 aa)) are beta-1. The Extracellular portion of the chain corresponds to 1–194 (FFQWSATVEC…PGDVSRSKLL (194 aa)). 2 cysteine pairs are disulfide-bonded: C10–C74 and C111–C167. An N-linked (GlcNAc...) asparagine glycan is attached at N14. Residues 90 to 182 (EPKVRIFALQ…SLQQPITQRW (93 aa)) are beta-2. One can recognise an Ig-like C1-type domain in the interval 91–179 (PKVRIFALQS…EHTSLQQPIT (89 aa)). The interval 183 to 194 (EPPGDVSRSKLL) is connecting peptide. The chain crosses the membrane as a helical span at residues 195 to 219 (MGVGGFVLGLVYLALGIFFFLCSKK). Residues 220–231 (GQPDPTSPGILN) lie on the Cytoplasmic side of the membrane.

It belongs to the MHC class II family.

The protein resides in the membrane. This chain is Class II histocompatibility antigen, B-L beta chain, found in Gallus gallus (Chicken).